The chain runs to 366 residues: Isocitrate dehydrogenase [NAD] subunit alpha, mitochondrial (366 aa).

The N-terminal 27 residues, Met1–Phe27, are a transit peptide targeting the mitochondrion. Lys77 carries the post-translational modification N6-succinyllysine. A Phosphothreonine modification is found at Thr101. Substrate is bound by residues Arg115, Arg125, and Arg146. Position 223 is an N6-acetyllysine (Lys223). Asp233, Asp257, and Asp261 together coordinate Mg(2+). Lys343 carries the N6-acetyllysine; alternate modification. Position 343 is an N6-succinyllysine; alternate (Lys343). Lys350 carries the N6-succinyllysine modification.

Belongs to the isocitrate and isopropylmalate dehydrogenases family. Heterooligomer of subunits alpha (IDH3A), beta (IDH3B), and gamma (IDH3G) in the apparent ratio of 2:1:1. The heterodimer containing one IDH3A and one IDH3B subunit and the heterodimer containing one IDH3A and one IDH3G subunit assemble into a heterotetramer (which contains two subunits of IDH3A, one of IDH3B and one of IDH3G) and further into the heterooctamer. Requires Mg(2+) as cofactor. Mn(2+) is required as a cofactor.

It localises to the mitochondrion. The catalysed reaction is D-threo-isocitrate + NAD(+) = 2-oxoglutarate + CO2 + NADH. With respect to regulation, the heterotetramer and the heterodimer composed of IDH3A and IDH3G subunits can be allosterically activated by citrate (CIT) or/and ADP, and the two activators can act independently or synergistically. The heterodimer composed of IDH3A and IDH3B subunits cannot be allosterically regulated and the allosteric regulation of the heterotetramer is through the IDH3G subunit and not the IDH3B subunit. The IDH3G subunit contains the allosteric site which consists of a CIT-binding site and an ADP-binding site, and the binding of CIT and ADP causes conformational changes at the allosteric site which are transmitted to the active site in the catalytic subunit (IDH3A) through a cascade of conformational changes at the heterodimer interface, leading to stabilization of the isocitrate-binding at the active site and thus activation of the enzyme. ATP can activate the heterotetramer and the heterodimer composed of IDH3A and IDH3G subunits at low concentrations but inhibits their activities at high concentrations, whereas ATP exhibits only inhibitory effect on the heterodimer composed of IDH3A and IDH3B subunits. Functionally, catalytic subunit of the enzyme which catalyzes the decarboxylation of isocitrate (ICT) into alpha-ketoglutarate. The heterodimer composed of the alpha (IDH3A) and beta (IDH3B) subunits and the heterodimer composed of the alpha (IDH3A) and gamma (IDH3G) subunits, have considerable basal activity but the full activity of the heterotetramer (containing two subunits of IDH3A, one of IDH3B and one of IDH3G) requires the assembly and cooperative function of both heterodimers. The chain is Isocitrate dehydrogenase [NAD] subunit alpha, mitochondrial (IDH3A) from Sus scrofa (Pig).